Consider the following 341-residue polypeptide: NADH-quinone oxidoreductase subunit H (341 aa).

Helical transmembrane passes span Pro38–Val58, Ile70–Ile90, Ile115–Gly135, Met161–Val181, Met187–Leu207, Leu239–Phe259, Ile275–Thr295, and Val314–Gly334.

It belongs to the complex I subunit 1 family. In terms of assembly, NDH-1 is composed of 14 different subunits. Subunits NuoA, H, J, K, L, M, N constitute the membrane sector of the complex.

The protein resides in the cell membrane. It carries out the reaction a quinone + NADH + 5 H(+)(in) = a quinol + NAD(+) + 4 H(+)(out). NDH-1 shuttles electrons from NADH, via FMN and iron-sulfur (Fe-S) centers, to quinones in the respiratory chain. The immediate electron acceptor for the enzyme in this species is believed to be ubiquinone. Couples the redox reaction to proton translocation (for every two electrons transferred, four hydrogen ions are translocated across the cytoplasmic membrane), and thus conserves the redox energy in a proton gradient. This subunit may bind ubiquinone. The sequence is that of NADH-quinone oxidoreductase subunit H from Wolbachia sp. subsp. Brugia malayi (strain TRS).